The primary structure comprises 171 residues: Crossover junction endodeoxyribonuclease RuvC (171 aa).

Residues D7, E66, and D138 contribute to the active site. Positions 7, 66, and 138 each coordinate Mg(2+).

Belongs to the RuvC family. In terms of assembly, homodimer which binds Holliday junction (HJ) DNA. The HJ becomes 2-fold symmetrical on binding to RuvC with unstacked arms; it has a different conformation from HJ DNA in complex with RuvA. In the full resolvosome a probable DNA-RuvA(4)-RuvB(12)-RuvC(2) complex forms which resolves the HJ. It depends on Mg(2+) as a cofactor.

Its subcellular location is the cytoplasm. It carries out the reaction Endonucleolytic cleavage at a junction such as a reciprocal single-stranded crossover between two homologous DNA duplexes (Holliday junction).. Functionally, the RuvA-RuvB-RuvC complex processes Holliday junction (HJ) DNA during genetic recombination and DNA repair. Endonuclease that resolves HJ intermediates. Cleaves cruciform DNA by making single-stranded nicks across the HJ at symmetrical positions within the homologous arms, yielding a 5'-phosphate and a 3'-hydroxyl group; requires a central core of homology in the junction. The consensus cleavage sequence is 5'-(A/T)TT(C/G)-3'. Cleavage occurs on the 3'-side of the TT dinucleotide at the point of strand exchange. HJ branch migration catalyzed by RuvA-RuvB allows RuvC to scan DNA until it finds its consensus sequence, where it cleaves and resolves the cruciform DNA. This is Crossover junction endodeoxyribonuclease RuvC from Thiobacillus denitrificans (strain ATCC 25259 / T1).